Reading from the N-terminus, the 499-residue chain is MATVIPGDLSEVRDTQKAPSGKRKRGESKPRKNFPCQLCDKAFNSVEKLKVHSFSHTGERPYKCTHQDCTKAFVSKYKLQRHMATHSPEKTHKCNYCEKMFHRKDHLKNHLHTHDPNKETFKCEECGKSYNTKLGFKRHLALHAATSGDLTCKVCLQNFESTGVLLEHLKSHAGKSSGGVKEKKHQCEHCERRFYTRKDVRRHMVVHTGRKDFLCQYCAQRFGRKDHLTRHMKKSHNQELLKVKTEPVDFLDPFTCNMSVPIKDELLPVMSLPSSELLSKPFTNTLQLNLYNTPFQSMQSSGSAHQMITTLPLGMTCPIDMDAVHPSHHLAFKCPFSSTSYAISIPEKEQPLKGEIESYLMELQGGAPSSSQDSPASSSKLGLEPQSGSPDDGAGDLSLSKSSISISDPLSTPALDFSQLFNFIPLNGPPYNPLSVGSLGMSYSQEEAHSSVSQLPTQTQDLQDPANTVGLSSLHSLSAAFTSSLSSSTTLPRFHQAFQ.

The tract at residues 1–33 (MATVIPGDLSEVRDTQKAPSGKRKRGESKPRKN) is disordered. Residues 2–84 (ATVIPGDLSE…SKYKLQRHMA (83 aa)) are interaction with KPNA2. Positions 22-25 (KRKR) match the Nuclear localization signal motif. 7 C2H2-type zinc fingers span residues 34–56 (FPCQ…SFSH), 62–86 (YKCT…MATH), 92–114 (HKCN…LHTH), 121–143 (FKCE…LALH), 150–172 (LTCK…LKSH), 185–207 (HQCE…MVVH), and 213–236 (FLCQ…KKSH). A decreased nuclear import with localization in the nucleus but also in the cytoplasm region spans residues 41 to 242 (KAFNSVEKLK…KKSHNQELLK (202 aa)). The interval 243–383 (VKTEPVDFLD…SPASSSKLGL (141 aa)) is repression domain; contains 3 sumoylation motifs and massively decrease transcription activity. Residues 243–499 (VKTEPVDFLD…TLPRFHQAFQ (257 aa)) form an activates transcription; Inhibition of nuclear import due to lack of NLS and KPNA2 interaction region. Glycyl lysine isopeptide (Lys-Gly) (interchain with G-Cter in SUMO) cross-links involve residues Lys244 and Lys263. Over residues 365–379 (GGAPSSSQDSPASSS) the composition is skewed to low complexity. The interval 365-400 (GGAPSSSQDSPASSSKLGLEPQSGSPDDGAGDLSLS) is disordered. The tract at residues 384–499 (EPQSGSPDDG…TLPRFHQAFQ (116 aa)) is massively activates transcription.

The protein belongs to the krueppel C2H2-type zinc-finger protein family. As to quaternary structure, interacts with KPNA2, which escorts protein to the nucleus via interaction with nuclear localization signal. Interacts with E3 SUMO-protein ligase PIAS1, PIAS2 and PIAS4. Post-translationally, sumoylated with SUMO1; which inhibits transcriptional activity, but does not affect nuclear localization. Blockers of sumoylation pathway such as SENP3 and inactive UBE2I increases transcriptional capacity. Sumoylation is increased in the presence of PIAS1. In terms of processing, acetylated by lysine acetyltransferase EP300; which activates transcriptional capacity. Lysine residues that are sumoylated also seem to be target for acetylation. Expressed in heart, spleen, lung, kidney, brain, testis and epididymis but not in salivary glands.

The protein resides in the nucleus. Its function is as follows. Transcription factor whose activation results in up-regulation of target genes, such as IGFII, leading to uncontrolled cell proliferation: when overexpressed in cultured cells, higher proliferation rate and transformation are observed. Other target genes such as CRLF1, CRABP2, CRIP2, PIGF are strongly induced in cells with PLAG1 induction. Proto-oncogene whose ectopic expression can trigger the development of pleomorphic adenomas of the salivary gland and lipoblastomas. Cooperates with CBFB-MYH11. The protein is Zinc finger protein PLAG1 (Plag1) of Mus musculus (Mouse).